The primary structure comprises 460 residues: Ankyrin repeat and MYND domain-containing protein 2 (460 aa).

ANK repeat units follow at residues 45–74 (HGMTPLMHAAYKGKVDMCRLLLRHGADVNC), 79–108 (HGYTALMFAGLSGNKEITWMMLEAGAETDV), and 159–188 (KLAGPLHKIITTTNMHPVKIVLLVKENPLL). Residues C320, C323, C332, C335, C341, C345, H353, and C357 each contribute to the Zn(2+) site. An MYND-type zinc finger spans residues 320-357 (CTTCGEKGADKRCSVCKVVMYCDQNCQKTHWFTHKKVC). Basic and acidic residues-rich tracts occupy residues 371 to 387 (AAKEKRRQEKKQKKDEA) and 425 to 436 (ELTKEPEARAPR). Residues 371-460 (AAKEKRRQEK…ALQKIQDSEE (90 aa)) form a disordered region.

The protein localises to the cell projection. It is found in the cilium. In terms of biological role, may be involved in the trafficking of signaling proteins to the cilia. This Gallus gallus (Chicken) protein is Ankyrin repeat and MYND domain-containing protein 2 (ANKMY2).